Here is a 476-residue protein sequence, read N- to C-terminus: Monofunctional riboflavin biosynthesis protein RIBA 2, chloroplastic (476 aa).

Residues 1 to 54 constitute a chloroplast transit peptide; sequence MASLTLRCDSTHLLPSRDVVKGTKPFGTSLVYPRIISKKFNVRMRVIPEEGDVF. The segment at 44-306 is DHBP synthase; that stretch reads MRVIPEEGDV…IADLIRYRRK (263 aa). Residues 130-131, Asp-135, 245-249, and Glu-269 contribute to the D-ribulose 5-phosphate site; these read RE and RAGHT. Position 131 (Glu-131) interacts with Mg(2+). Residue His-248 coordinates Mg(2+). An inactive GTP cyclohydrolase II region spans residues 307-476; sequence RERLVEFTAV…SGKVPLITTP (170 aa). Residues 357–361, Gln-376, 399–401, and Thr-450 each bind GTP; these read RVHAE and ESK.

It in the N-terminal section; belongs to the DHBP synthase family. The protein in the C-terminal section; belongs to the GTP cyclohydrolase II family. Mg(2+) serves as cofactor. Mn(2+) is required as a cofactor. As to expression, expressed in leaves, shoots, roots, flowers and siliques.

It localises to the plastid. The protein localises to the chloroplast. It carries out the reaction D-ribulose 5-phosphate = (2S)-2-hydroxy-3-oxobutyl phosphate + formate + H(+). It functions in the pathway cofactor biosynthesis; riboflavin biosynthesis; 2-hydroxy-3-oxobutyl phosphate from D-ribulose 5-phosphate: step 1/1. In terms of biological role, involved in riboflavin biosynthesis. Catalyzes the conversion of D-ribulose 5-phosphate to formate and 3,4-dihydroxy-2-butanone 4-phosphate. RIBA2 and RIBA3 together are not able to complement the loss of function of RIBA1. This is Monofunctional riboflavin biosynthesis protein RIBA 2, chloroplastic (RIBA2) from Arabidopsis thaliana (Mouse-ear cress).